Here is a 507-residue protein sequence, read N- to C-terminus: Cobyric acid synthase (507 aa).

Residues 249–451 form the GATase cobBQ-type domain; that stretch reads DIEIAVINLP…IHGIFENREF (203 aa). C330 acts as the Nucleophile in catalysis. Residue H443 is part of the active site.

It belongs to the CobB/CobQ family. CobQ subfamily.

Its pathway is cofactor biosynthesis; adenosylcobalamin biosynthesis. In terms of biological role, catalyzes amidations at positions B, D, E, and G on adenosylcobyrinic A,C-diamide. NH(2) groups are provided by glutamine, and one molecule of ATP is hydrogenolyzed for each amidation. This is Cobyric acid synthase from Thermoanaerobacter sp. (strain X514).